Reading from the N-terminus, the 286-residue chain is 4-hydroxybenzoate octaprenyltransferase (286 aa).

The next 7 membrane-spanning stretches (helical) occupy residues 21–40 (GTLL…AGGM), 95–115 (ILFV…NGLV), 142–162 (FLGI…TGEV), 167–187 (WWLF…YAMV), 210–230 (QIIG…GWSA), 235–255 (LYGL…MLIF), and 266–286 (FLNN…DYLI).

The protein belongs to the UbiA prenyltransferase family. Requires Mg(2+) as cofactor.

The protein localises to the cell inner membrane. It catalyses the reaction all-trans-octaprenyl diphosphate + 4-hydroxybenzoate = 4-hydroxy-3-(all-trans-octaprenyl)benzoate + diphosphate. It functions in the pathway cofactor biosynthesis; ubiquinone biosynthesis. Its function is as follows. Catalyzes the prenylation of para-hydroxybenzoate (PHB) with an all-trans polyprenyl group. Mediates the second step in the final reaction sequence of ubiquinone-8 (UQ-8) biosynthesis, which is the condensation of the polyisoprenoid side chain with PHB, generating the first membrane-bound Q intermediate 3-octaprenyl-4-hydroxybenzoate. This Shewanella baltica (strain OS223) protein is 4-hydroxybenzoate octaprenyltransferase.